A 185-amino-acid polypeptide reads, in one-letter code: Large ribosomal subunit protein uL5 (185 aa).

The protein belongs to the universal ribosomal protein uL5 family. Part of the 50S ribosomal subunit; part of the 5S rRNA/L5/L18/L25 subcomplex. Contacts the 5S rRNA and the P site tRNA. Forms a bridge to the 30S subunit in the 70S ribosome.

In terms of biological role, this is one of the proteins that bind and probably mediate the attachment of the 5S RNA into the large ribosomal subunit, where it forms part of the central protuberance. In the 70S ribosome it contacts protein S13 of the 30S subunit (bridge B1b), connecting the 2 subunits; this bridge is implicated in subunit movement. Contacts the P site tRNA; the 5S rRNA and some of its associated proteins might help stabilize positioning of ribosome-bound tRNAs. This Bartonella bacilliformis (strain ATCC 35685 / KC583 / Herrer 020/F12,63) protein is Large ribosomal subunit protein uL5.